The primary structure comprises 405 residues: mRNA cap guanine-N(7) methyltransferase (405 aa).

Positions 1-78 (MDNILNPEDN…PRLEEGHGSL (78 aa)) are disordered. Composition is skewed to polar residues over residues 9-18 (DNVSQTNTET) and 36-45 (KFTASGQNLD). Residues 58-75 (KAGEPESPSKRPRLEEGH) show a composition bias toward basic and acidic residues. The 308-residue stretch at 97–404 (SRIFHLRNFN…IYLLFAFEKQ (308 aa)) folds into the mRNA cap 0 methyltransferase domain. 106–107 (NN) provides a ligand contact to mRNA. Residues lysine 110, glycine 134, aspartate 156, aspartate 190, glutamine 213, and tyrosine 218 each coordinate S-adenosyl-L-methionine.

This sequence belongs to the class I-like SAM-binding methyltransferase superfamily. mRNA cap 0 methyltransferase family.

Its subcellular location is the nucleus. The enzyme catalyses a 5'-end (5'-triphosphoguanosine)-ribonucleoside in mRNA + S-adenosyl-L-methionine = a 5'-end (N(7)-methyl 5'-triphosphoguanosine)-ribonucleoside in mRNA + S-adenosyl-L-homocysteine. In terms of biological role, catalytic subunit of the mRNA-capping methyltransferase RNMT:RAMAC complex that methylates the N7 position of the added guanosine to the 5'-cap structure of mRNAs. Binds RNA containing 5'-terminal GpppC. The protein is mRNA cap guanine-N(7) methyltransferase (rnmt) of Xenopus tropicalis (Western clawed frog).